Reading from the N-terminus, the 275-residue chain is Membrane protein insertase YidC 1 (275 aa).

Positions 1–25 are cleaved as a signal peptide; that stretch reads MRKVLRVKKNIKIARIVPLVLLLVA. C26 is lipidated: N-palmitoyl cysteine. Residue C26 is the site of S-diacylglycerol cysteine attachment. 5 helical membrane-spanning segments follow: residues 58 to 78, 129 to 149, 171 to 191, 198 to 216, and 222 to 240; these read SIGV…MPLF, YASL…FQAL, LYLL…LTNL, VMMT…FMGF, and VVLY…LLLL.

The protein belongs to the OXA1/ALB3/YidC family. Type 2 subfamily.

It localises to the cell membrane. Functionally, required for the insertion and/or proper folding and/or complex formation of integral membrane proteins into the membrane. Involved in integration of membrane proteins that insert both dependently and independently of the Sec translocase complex, as well as at least some lipoproteins. In Streptococcus pyogenes serotype M6 (strain ATCC BAA-946 / MGAS10394), this protein is Membrane protein insertase YidC 1.